The following is a 631-amino-acid chain: Chaperone protein DnaK (631 aa).

Thr-198 is subject to Phosphothreonine; by autocatalysis. Positions 602-631 are disordered; it reads EAAGGAQQAGKDDVVDAEFTEVDDDKKKSA.

Belongs to the heat shock protein 70 family.

Acts as a chaperone. The polypeptide is Chaperone protein DnaK (Rhodopseudomonas palustris (strain ATCC BAA-98 / CGA009)).